A 227-amino-acid polypeptide reads, in one-letter code: Basic leucine zipper 24 (227 aa).

A disordered region spans residues 44 to 68 (EDKDQDRVTRGCSHTHSCNPPGPED). The region spanning 94 to 160 (DSSNKKRLCG…IRLRALLVEM (67 aa)) is the bZIP domain. The basic motif stretch occupies residues 98–118 (KKRLCGNREAVRKYREKKKAR). The segment at 122–129 (LEDEVMRL) is leucine-zipper.

As to quaternary structure, homodimer. Expressed in young leaves and cauline leaves.

The protein localises to the nucleus. It localises to the cytoplasm. Transcription factor involved in the regulation of salt stress response. Functions as a negative transcriptional regulator of salt stress acclimation response by regulating cation homeostasis. Negatively regulates the expression of genes contributing to ion and osmotic homeostasis during salt stress, such as the Na(+) transporter HKT1, the Na(+)/H(+) antiporter SOS1, the aquaporin PIP2-1 and the glutamine synthetase GLN1-3. In addition, targets genes with functions in plant growth and development, such as argonaute 4 (AGO4) and cyclophilin 19 (CYP19). The protein is Basic leucine zipper 24 of Arabidopsis thaliana (Mouse-ear cress).